Here is a 441-residue protein sequence, read N- to C-terminus: Homoserine dehydrogenase (441 aa).

Residues asparagine 17 and valine 18 each coordinate NADP(+). Residues valine 18 and glycine 47 each coordinate NAD(+). Valine 18 lines the NADPH pocket. NADP(+)-binding residues include arginine 49, arginine 50, and lysine 107. NADPH is bound at residue arginine 49. Position 107 (lysine 107) interacts with NADPH. Na(+)-binding residues include glutamate 131, valine 134, glycine 136, and isoleucine 138. The NADP(+) site is built by glycine 189 and glutamate 192. L-homoserine is bound by residues glutamate 192 and aspartate 203. Lysine 207 (proton donor) is an active-site residue. An NADP(+)-binding site is contributed by glycine 309. Glycine 309 contacts NAD(+). Glycine 309 lines the NADPH pocket. The 80-residue stretch at 356-435 folds into the ACT domain; the sequence is YVSMNVADKP…VVQGVTSVLR (80 aa).

The protein belongs to the homoserine dehydrogenase family. A metal cation is required as a cofactor.

It carries out the reaction L-homoserine + NADP(+) = L-aspartate 4-semialdehyde + NADPH + H(+). The enzyme catalyses L-homoserine + NAD(+) = L-aspartate 4-semialdehyde + NADH + H(+). The protein operates within amino-acid biosynthesis; L-methionine biosynthesis via de novo pathway; L-homoserine from L-aspartate: step 3/3. It functions in the pathway amino-acid biosynthesis; L-threonine biosynthesis; L-threonine from L-aspartate: step 3/5. Functionally, catalyzes the conversion of L-aspartate-beta-semialdehyde (L-Asa) to L-homoserine (L-Hse), the third step in the biosynthesis of threonine and methionine from aspartate. This chain is Homoserine dehydrogenase (hom), found in Mycobacterium leprae (strain TN).